The primary structure comprises 287 residues: Protease HtpX homolog (287 aa).

The next 2 helical transmembrane spans lie at 5–25 (IRTGLLMAALTALFVAIGYWI) and 28–48 (GAGAAIALAFAAAGNFVAYWV). Histidine 131 is a binding site for Zn(2+). The active site involves glutamate 132. Histidine 135 serves as a coordination point for Zn(2+). A run of 2 helical transmembrane segments spans residues 146-166 (VTATLAGAIGMISNLAIFFGG) and 174-194 (PFAGIAGLLLLLLAPLTATLV). A Zn(2+)-binding site is contributed by glutamate 203.

This sequence belongs to the peptidase M48B family. Requires Zn(2+) as cofactor.

The protein resides in the cell inner membrane. This is Protease HtpX homolog from Acidiphilium cryptum (strain JF-5).